The sequence spans 271 residues: Putative phosphoenolpyruvate synthase regulatory protein (271 aa).

151–158 (GVSRSGKT) provides a ligand contact to ADP.

The protein belongs to the pyruvate, phosphate/water dikinase regulatory protein family. PSRP subfamily.

It catalyses the reaction [pyruvate, water dikinase] + ADP = [pyruvate, water dikinase]-phosphate + AMP + H(+). The enzyme catalyses [pyruvate, water dikinase]-phosphate + phosphate + H(+) = [pyruvate, water dikinase] + diphosphate. In terms of biological role, bifunctional serine/threonine kinase and phosphorylase involved in the regulation of the phosphoenolpyruvate synthase (PEPS) by catalyzing its phosphorylation/dephosphorylation. This Burkholderia cenocepacia (strain ATCC BAA-245 / DSM 16553 / LMG 16656 / NCTC 13227 / J2315 / CF5610) (Burkholderia cepacia (strain J2315)) protein is Putative phosphoenolpyruvate synthase regulatory protein.